The sequence spans 423 residues: UDP-N-acetylglucosamine 1-carboxyvinyltransferase (423 aa).

22–23 (KN) lines the phosphoenolpyruvate pocket. Arg-93 contributes to the UDP-N-acetyl-alpha-D-glucosamine binding site. Catalysis depends on Cys-117, which acts as the Proton donor. A 2-(S-cysteinyl)pyruvic acid O-phosphothioketal modification is found at Cys-117. UDP-N-acetyl-alpha-D-glucosamine contacts are provided by residues 122–126 (RPVDL), Asp-308, and Ile-330.

The protein belongs to the EPSP synthase family. MurA subfamily.

Its subcellular location is the cytoplasm. It carries out the reaction phosphoenolpyruvate + UDP-N-acetyl-alpha-D-glucosamine = UDP-N-acetyl-3-O-(1-carboxyvinyl)-alpha-D-glucosamine + phosphate. It functions in the pathway cell wall biogenesis; peptidoglycan biosynthesis. Its function is as follows. Cell wall formation. Adds enolpyruvyl to UDP-N-acetylglucosamine. This chain is UDP-N-acetylglucosamine 1-carboxyvinyltransferase, found in Maricaulis maris (strain MCS10) (Caulobacter maris).